A 508-amino-acid polypeptide reads, in one-letter code: Maturase K (508 aa).

This sequence belongs to the intron maturase 2 family. MatK subfamily.

Its subcellular location is the plastid. The protein resides in the chloroplast. In terms of biological role, usually encoded in the trnK tRNA gene intron. Probably assists in splicing its own and other chloroplast group II introns. This is Maturase K from Amburana cearensis (Cerejeira).